Here is a 416-residue protein sequence, read N- to C-terminus: Serine hydroxymethyltransferase 1 (416 aa).

Residues Leu-121 and 125–127 (GHL) contribute to the (6S)-5,6,7,8-tetrahydrofolate site. N6-(pyridoxal phosphate)lysine is present on Lys-229. (6S)-5,6,7,8-tetrahydrofolate is bound by residues Glu-245 and 354 to 356 (SPF).

Belongs to the SHMT family. In terms of assembly, homodimer. Requires pyridoxal 5'-phosphate as cofactor.

Its subcellular location is the cytoplasm. The enzyme catalyses (6R)-5,10-methylene-5,6,7,8-tetrahydrofolate + glycine + H2O = (6S)-5,6,7,8-tetrahydrofolate + L-serine. It participates in one-carbon metabolism; tetrahydrofolate interconversion. Its pathway is amino-acid biosynthesis; glycine biosynthesis; glycine from L-serine: step 1/1. Functionally, catalyzes the reversible interconversion of serine and glycine with tetrahydrofolate (THF) serving as the one-carbon carrier. This reaction serves as the major source of one-carbon groups required for the biosynthesis of purines, thymidylate, methionine, and other important biomolecules. Also exhibits THF-independent aldolase activity toward beta-hydroxyamino acids, producing glycine and aldehydes, via a retro-aldol mechanism. This chain is Serine hydroxymethyltransferase 1, found in Vibrio vulnificus (strain CMCP6).